An 85-amino-acid polypeptide reads, in one-letter code: Kunitz-type serine protease inhibitor homolog beta-bungarotoxin B2a chain (85 aa).

Residues Met1–Ser24 form the signal peptide. Positions Cys31–Cys81 constitute a BPTI/Kunitz inhibitor domain. Cystine bridges form between Cys31-Cys81, Cys40-Cys64, and Cys56-Cys77.

This sequence belongs to the venom Kunitz-type family. As to quaternary structure, heterodimer; disulfide-linked. The A chain has phospholipase A2 activity and the B chain shows homology with the basic protease inhibitors. As to expression, expressed by the venom gland.

It is found in the secreted. Functionally, beta-bungarotoxin is a presynaptic neurotoxin of the venom. The B chain is homologous to venom basic protease inhibitors but has no protease inhibitor activity and is non-toxic. The sequence is that of Kunitz-type serine protease inhibitor homolog beta-bungarotoxin B2a chain from Bungarus candidus (Malayan krait).